A 138-amino-acid chain; its full sequence is MQKIHDHTPNPTQILGFITLFVSGAVLLFLTGLTLTGTVVGLVVLTPVLIFFSPILIPLATVLFVAVAGFLSAGGFGLAALSAISWLYNYIKGRHPPGADQIDYARMRIADTATHVKDYAREYGGYLQSKIQDAAPGA.

The next 3 helical transmembrane spans lie at 14 to 34 (ILGF…TGLT), 48 to 68 (VLIF…VAVA), and 69 to 89 (GFLS…WLYN). A Proline-knot motif is present at residues 47–58 (PVLIFFSPILIP).

It belongs to the oleosin family. As to expression, expressed in megagametophytes (at protein level).

The protein resides in the lipid droplet. It is found in the membrane. The sequence is that of Oleosin G from Pinus massoniana (Chinese red pine).